A 476-amino-acid polypeptide reads, in one-letter code: MSAAAVILFPFIGILLLSQISSYRISSWLNTLFSFLSFVGSLFLLFKKDPPGSFFLVDELNIVFILLTNFIGFTTALFSQRYIAHEIEIGHLSPPSLRFYHSMYQALLFGMNLALCSNNIGLMWVSIEMATLSTVLMVGIYRTTESLEASWKYFILGGVGIALALFGTFLFYISARPTIGEGLAAMAWTNLFSHAAYLDSSLVNIGFIFILIGYGTKVGLFPLHGWLPDAHAEGPTPISAVLSGLLLNVALYAILRFKILLSANPHALQAGPLLTAMGLASVLFAALMFYKRRDIKRLFAYSSIEHMGIISFAFGIGGALANFAGLLHMSMHSLTKSAIFFAIGYISQIKRTQKIADLSGLTSSHPVLGWGLVFGVLAIAGLPPMGVFMSEFLVLSSAFARSPLLAACLAVGLITALGALILKLVQVSFGEPRGDSSPIRSLYLPMFSHFLLVFAAGVYIPPRVVEWFQHCSVLLK.

Helical transmembrane passes span 1-21, 25-45, 54-74, 120-140, 153-173, 202-222, 235-255, 270-290, 307-327, 368-388, 402-422, and 442-462; these read MSAAAVILFPFIGILLLSQIS, ISSWLNTLFSFLSFVGSLFLL, FFLVDELNIVFILLTNFIGFT, IGLMWVSIEMATLSTVLMVGI, YFILGGVGIALALFGTFLFYI, LVNIGFIFILIGYGTKVGLFP, PTPISAVLSGLLLNVALYAIL, AGPLLTAMGLASVLFAALMFY, MGIISFAFGIGGALANFAGLL, LGWGLVFGVLAIAGLPPMGVF, SPLLAACLAVGLITALGALIL, and LYLPMFSHFLLVFAAGVYIPP.

The protein belongs to the complex I subunit 5 family.

The protein localises to the cell inner membrane. This Methylacidiphilum infernorum (isolate V4) (Methylokorus infernorum (strain V4)) protein is Hydrogenase-4 component F homolog (hyfF).